A 134-amino-acid polypeptide reads, in one-letter code: uncharacterized protein (134 aa).

Helical transmembrane passes span 5-25 (FGIF…FGGF), 30-50 (LILL…ETII), and 62-82 (LVKK…DQLL).

The protein belongs to the bacteriophage holin family. Cp-1 holin subfamily.

The protein resides in the cell membrane. This is an uncharacterized protein from Bacillus subtilis (strain 168).